Reading from the N-terminus, the 310-residue chain is Calcium homeostasis modulator protein 5 (310 aa).

The next 4 helical transmembrane spans lie at 17–37 (TIGY…FSMV), 49–69 (FPYG…VGFF), 101–121 (LIKV…VALL), and 181–201 (QILG…GTCY).

The protein belongs to the CALHM family.

The protein localises to the membrane. Its function is as follows. Pore-forming subunit of a voltage-gated ion channel. This chain is Calcium homeostasis modulator protein 5 (calhm5.1), found in Danio rerio (Zebrafish).